The primary structure comprises 218 residues: Glutathione S-transferase Mu 1 (218 aa).

A GST N-terminal domain is found at 2–88 (PMTLGYWDVR…YLARKHGLCG (87 aa)). Residues 7–8 (YW), 46–50 (WLSEK), 59–60 (NL), and 72–73 (QS) each bind glutathione. The 119-residue stretch at 90 to 208 (TEEERIRVDI…KSSRFIRVPV (119 aa)) folds into the GST C-terminal domain. Y116 is a substrate binding site.

Belongs to the GST superfamily. Mu family. Homodimer. In terms of tissue distribution, well expressed in rabbit liver, brain and kidney.

Its subcellular location is the cytoplasm. The catalysed reaction is RX + glutathione = an S-substituted glutathione + a halide anion + H(+). Conjugation of reduced glutathione to a wide number of exogenous and endogenous hydrophobic electrophiles. The chain is Glutathione S-transferase Mu 1 from Oryctolagus cuniculus (Rabbit).